Here is a 461-residue protein sequence, read N- to C-terminus: Cysteine--tRNA ligase (461 aa).

Cysteine 28 lines the Zn(2+) pocket. Residues 30–40 carry the 'HIGH' region motif; sequence ITIYDLCHIGH. Zn(2+)-binding residues include cysteine 209, histidine 234, and glutamate 238. The 'KMSKS' region motif lies at 266 to 270; that stretch reads KMSKS. Lysine 269 contributes to the ATP binding site.

This sequence belongs to the class-I aminoacyl-tRNA synthetase family. As to quaternary structure, monomer. Zn(2+) serves as cofactor.

Its subcellular location is the cytoplasm. The enzyme catalyses tRNA(Cys) + L-cysteine + ATP = L-cysteinyl-tRNA(Cys) + AMP + diphosphate. In Yersinia pseudotuberculosis serotype IB (strain PB1/+), this protein is Cysteine--tRNA ligase.